Here is a 274-residue protein sequence, read N- to C-terminus: Large ribosomal subunit protein uL2cz (274 aa).

Disordered stretches follow at residues 1–25 and 224–274; these read MAIH…VKSN and NPVD…RRSK. Residues 7-25 are compositionally biased toward polar residues; the sequence is KTSTPSTRNGTVDSQVKSN.

It belongs to the universal ribosomal protein uL2 family. In terms of assembly, part of the 50S ribosomal subunit.

The protein localises to the plastid. The protein resides in the chloroplast. The chain is Large ribosomal subunit protein uL2cz (rpl2-A) from Coffea arabica (Arabian coffee).